A 389-amino-acid chain; its full sequence is Cytochrome b (389 aa).

The next 4 membrane-spanning stretches (helical) occupy residues 32-52 (FGSL…FLAM), 76-98 (WLIR…LHIA), 113-133 (TWTI…LGYT), and 179-199 (FFSL…MHMI). Heme b is bound by residues His-82 and His-96. Heme b contacts are provided by His-183 and His-197. A ubiquinone is bound at residue His-202. 4 consecutive transmembrane segments (helical) span residues 225–245 (YLIK…IIIF), 289–309 (LFGV…PLLD), 321–341 (IGKL…FIGA), and 348–368 (YVAI…FFIP).

This sequence belongs to the cytochrome b family. Fungal cytochrome b-c1 complex contains 10 subunits; 3 respiratory subunits, 2 core proteins and 5 low-molecular weight proteins. Cytochrome b-c1 complex is a homodimer. The cofactor is heme b.

The protein resides in the mitochondrion inner membrane. Functionally, component of the ubiquinol-cytochrome c reductase complex (complex III or cytochrome b-c1 complex) that is part of the mitochondrial respiratory chain. The b-c1 complex mediates electron transfer from ubiquinol to cytochrome c. Contributes to the generation of a proton gradient across the mitochondrial membrane that is then used for ATP synthesis. This is Cytochrome b (cob) from Schizosaccharomyces japonicus (Fission yeast).